The chain runs to 253 residues: UPF0246 protein LBA1843 (253 aa).

Belongs to the UPF0246 family.

The chain is UPF0246 protein LBA1843 from Lactobacillus acidophilus (strain ATCC 700396 / NCK56 / N2 / NCFM).